The sequence spans 247 residues: Uridylate kinase (247 aa).

18–21 (KLSG) is a binding site for ATP. Position 60 (Gly-60) interacts with UMP. ATP-binding residues include Gly-61 and Arg-65. Residues Asp-80 and 141 to 148 (TGNPFFTT) contribute to the UMP site. 3 residues coordinate ATP: Thr-168, Tyr-174, and Asp-177.

The protein belongs to the UMP kinase family. As to quaternary structure, homohexamer.

It localises to the cytoplasm. The enzyme catalyses UMP + ATP = UDP + ADP. The protein operates within pyrimidine metabolism; CTP biosynthesis via de novo pathway; UDP from UMP (UMPK route): step 1/1. Its activity is regulated as follows. Inhibited by UTP. In terms of biological role, catalyzes the reversible phosphorylation of UMP to UDP. This is Uridylate kinase from Pseudomonas savastanoi pv. phaseolicola (strain 1448A / Race 6) (Pseudomonas syringae pv. phaseolicola (strain 1448A / Race 6)).